Here is a 322-residue protein sequence, read N- to C-terminus: tRNA-dihydrouridine synthase B (322 aa).

FMN is bound by residues 16-18 (PMA) and Gln70. Cys100 functions as the Proton donor in the catalytic mechanism. FMN contacts are provided by residues Lys139, 200–202 (NGD), and 224–225 (GR).

This sequence belongs to the Dus family. DusB subfamily. FMN serves as cofactor.

It catalyses the reaction a 5,6-dihydrouridine in tRNA + NAD(+) = a uridine in tRNA + NADH + H(+). The catalysed reaction is a 5,6-dihydrouridine in tRNA + NADP(+) = a uridine in tRNA + NADPH + H(+). Its function is as follows. Catalyzes the synthesis of 5,6-dihydrouridine (D), a modified base found in the D-loop of most tRNAs, via the reduction of the C5-C6 double bond in target uridines. This chain is tRNA-dihydrouridine synthase B, found in Shewanella oneidensis (strain ATCC 700550 / JCM 31522 / CIP 106686 / LMG 19005 / NCIMB 14063 / MR-1).